Consider the following 402-residue polypeptide: Phosphoglycerate kinase (402 aa).

Substrate is bound by residues 24–26 (DLN), R39, 62–65 (HLGR), R121, and R161. ATP-binding positions include K211, G299, E330, and 359 to 362 (GGDS).

The protein belongs to the phosphoglycerate kinase family. In terms of assembly, monomer.

Its subcellular location is the cytoplasm. It carries out the reaction (2R)-3-phosphoglycerate + ATP = (2R)-3-phospho-glyceroyl phosphate + ADP. It functions in the pathway carbohydrate degradation; glycolysis; pyruvate from D-glyceraldehyde 3-phosphate: step 2/5. The sequence is that of Phosphoglycerate kinase from Mycolicibacterium gilvum (strain PYR-GCK) (Mycobacterium gilvum (strain PYR-GCK)).